A 378-amino-acid chain; its full sequence is Cysteine synthase (378 aa).

Residues 10–31 are disordered; that stretch reads NSEGDSNQQQNNNNNSNNNLKE. Over residues 15–28 the composition is skewed to low complexity; the sequence is SNQQQNNNNNSNNN. Lys79 is modified (N6-(pyridoxal phosphate)lysine). Pyridoxal 5'-phosphate contacts are provided by residues 215 to 219 and Ser319; that span reads GTGGT.

Belongs to the cysteine synthase/cystathionine beta-synthase family. Requires pyridoxal 5'-phosphate as cofactor.

It catalyses the reaction O-acetyl-L-serine + hydrogen sulfide = L-cysteine + acetate. Its pathway is amino-acid biosynthesis; L-cysteine biosynthesis; L-cysteine from L-serine: step 2/2. The sequence is that of Cysteine synthase (cysK) from Dictyostelium discoideum (Social amoeba).